The chain runs to 44 residues: Photosystem I reaction center subunit IX (44 aa).

A helical transmembrane segment spans residues 7–27 (YLSTAPVLTTLWFGSLAGLLI).

Belongs to the PsaJ family.

The protein resides in the plastid. It is found in the chloroplast thylakoid membrane. In terms of biological role, may help in the organization of the PsaE and PsaF subunits. This is Photosystem I reaction center subunit IX from Phalaenopsis aphrodite subsp. formosana (Moth orchid).